We begin with the raw amino-acid sequence, 467 residues long: Indoleacetamide hydrolase (467 aa).

Residues lysine 74 and serine 149 each act as charge relay system in the active site. Serine 173 functions as the Acyl-ester intermediate in the catalytic mechanism.

This sequence belongs to the amidase family.

It participates in plant hormone metabolism; auxin biosynthesis. In terms of biological role, hydrolyzes indole-3-acetamide (IAM) into indole-3-acetic acid (IAA). The chain is Indoleacetamide hydrolase (tms2) from Rhizobium radiobacter (Agrobacterium tumefaciens).